A 143-amino-acid polypeptide reads, in one-letter code: uncharacterized protein (143 aa).

The next 2 helical transmembrane spans lie at 20 to 39 and 113 to 135; these read FKYC…WITV and YFSL…ITGL.

It is found in the membrane. This is an uncharacterized protein from Saccharomyces cerevisiae (strain ATCC 204508 / S288c) (Baker's yeast).